A 244-amino-acid polypeptide reads, in one-letter code: Ubiquinone/menaquinone biosynthesis C-methyltransferase UbiE (244 aa).

S-adenosyl-L-methionine is bound by residues threonine 70, aspartate 91, and 117–118 (DA).

It belongs to the class I-like SAM-binding methyltransferase superfamily. MenG/UbiE family.

It catalyses the reaction a 2-demethylmenaquinol + S-adenosyl-L-methionine = a menaquinol + S-adenosyl-L-homocysteine + H(+). It carries out the reaction a 2-methoxy-6-(all-trans-polyprenyl)benzene-1,4-diol + S-adenosyl-L-methionine = a 5-methoxy-2-methyl-3-(all-trans-polyprenyl)benzene-1,4-diol + S-adenosyl-L-homocysteine + H(+). It participates in quinol/quinone metabolism; menaquinone biosynthesis; menaquinol from 1,4-dihydroxy-2-naphthoate: step 2/2. Its pathway is cofactor biosynthesis; ubiquinone biosynthesis. Its function is as follows. Methyltransferase required for the conversion of demethylmenaquinol (DMKH2) to menaquinol (MKH2) and the conversion of 2-polyprenyl-6-methoxy-1,4-benzoquinol (DDMQH2) to 2-polyprenyl-3-methyl-6-methoxy-1,4-benzoquinol (DMQH2). The protein is Ubiquinone/menaquinone biosynthesis C-methyltransferase UbiE of Chromobacterium violaceum (strain ATCC 12472 / DSM 30191 / JCM 1249 / CCUG 213 / NBRC 12614 / NCIMB 9131 / NCTC 9757 / MK).